The following is a 707-amino-acid chain: Matrix metalloproteinase-9 (707 aa).

The N-terminal stretch at 1–19 (MSLWQPLVLVLLVLGCCFA) is a signal peptide. A propeptide spans 20–93 (APRQRQSTLV…GELDSATLKA (74 aa)) (activation peptide). An N-linked (GlcNAc...) asparagine glycan is attached at Asn38. A Cysteine switch motif is present at residues 97–104 (PRCGVPDL). Cys99 contacts Zn(2+). N-linked (GlcNAc...) asparagine glycans are attached at residues Asn120 and Asn127. 2 residues coordinate Ca(2+): Asp131 and Asp165. Zn(2+)-binding residues include His175 and Asp177. Ca(2+)-binding residues include Asp182, Gly183, Asp185, and Leu187. Residue His190 participates in Zn(2+) binding. 3 residues coordinate Ca(2+): Gly197, Gln199, and Asp201. Zn(2+) is bound at residue His203. 3 residues coordinate Ca(2+): Asp205, Asp206, and Glu208. 3 Fibronectin type-II domains span residues 225–273 (ADGA…FCPS), 283–331 (ADGK…FCPT), and 342–390 (SAGE…FCPD). Disulfide bonds link Cys230/Cys256, Cys244/Cys271, Cys288/Cys314, Cys302/Cys329, Cys347/Cys373, and Cys361/Cys388. His401 provides a ligand contact to Zn(2+). Glu402 is an active-site residue. 2 residues coordinate Zn(2+): His405 and His411. A disordered region spans residues 431–508 (LHKDDVNGIR…AGPSTATTVP (78 aa)). Composition is skewed to pro residues over residues 452-475 (RPPT…PPTV) and 486-499 (TGPP…PPTA). Residues Cys516 and Cys704 are joined by a disulfide bond. Hemopexin repeat units lie at residues 518 to 563 (VNIF…WPAL), 564 to 608 (PRKL…GLGA), 610 to 657 (VAQV…FPGV), and 658 to 704 (PLDT…ILQC).

Belongs to the peptidase M10A family. As to quaternary structure, exists as monomer or homodimer; disulfide-linked. Also exists as heterodimer with LCN2. Macrophages and transformed cell lines produce only the monomeric form. Interacts with ECM1. (Microbial infection) Interacts with Staphylococcus aureus protein SSL5; this interaction inhibits MMP9 activity. The cofactor is Zn(2+). Ca(2+) is required as a cofactor. Processing of the precursor yields different active forms of 64, 67 and 82 kDa. Sequentially processing by MMP3 yields the 82 kDa matrix metalloproteinase-9. Post-translationally, N- and O-glycosylated. In terms of tissue distribution, detected in neutrophils (at protein level). Produced by normal alveolar macrophages and granulocytes.

It localises to the secreted. The protein localises to the extracellular space. The protein resides in the extracellular matrix. The catalysed reaction is Cleavage of gelatin types I and V and collagen types IV and V.. Its activity is regulated as follows. Inhibited by histatin-3 1/24 (histatin-5). Inhibited by ECM1. Matrix metalloproteinase that plays an essential role in local proteolysis of the extracellular matrix and in leukocyte migration. Could play a role in bone osteoclastic resorption. Cleaves KiSS1 at a Gly-|-Leu bond. Cleaves NINJ1 to generate the Secreted ninjurin-1 form. Cleaves type IV and type V collagen into large C-terminal three quarter fragments and shorter N-terminal one quarter fragments. Degrades fibronectin but not laminin or Pz-peptide. This is Matrix metalloproteinase-9 (MMP9) from Homo sapiens (Human).